A 464-amino-acid polypeptide reads, in one-letter code: Glutamate decarboxylase beta (464 aa).

An N6-(pyridoxal phosphate)lysine modification is found at lysine 275.

Belongs to the group II decarboxylase family. Pyridoxal 5'-phosphate is required as a cofactor.

The catalysed reaction is L-glutamate + H(+) = 4-aminobutanoate + CO2. Its function is as follows. Converts internalized glutamate to GABA and increases the internal pH. Involved in glutamate-dependent acid resistance in gastric fluid. In Listeria monocytogenes serovar 1/2a (strain ATCC BAA-679 / EGD-e), this protein is Glutamate decarboxylase beta (gadB).